The sequence spans 520 residues: Cytochrome P450 monooxygenase 176 (520 aa).

The N-linked (GlcNAc...) asparagine glycan is linked to asparagine 6. The chain crosses the membrane as a helical span at residues leucine 10 to isoleucine 27. 2 N-linked (GlcNAc...) asparagine glycosylation sites follow: asparagine 141 and asparagine 270. A heme-binding site is contributed by cysteine 445. Asparagine 517 is a glycosylation site (N-linked (GlcNAc...) asparagine).

This sequence belongs to the cytochrome P450 family. Heme is required as a cofactor.

The protein localises to the membrane. Its pathway is secondary metabolite biosynthesis. In terms of biological role, cytochrome P450 monooxygenase that is able to use delta(6)-protoilludene as a substrate to produce delta(6)-protoilludene-5-ol and an unidentified hydroxyprotoilludene. Is also able to use phenanthrene as a substrate for oxidation. This chain is Cytochrome P450 monooxygenase 176, found in Postia placenta (strain ATCC 44394 / Madison 698-R) (Brown rot fungus).